The chain runs to 208 residues: Small ribosomal subunit protein uS4 (208 aa).

Residues Arg98–Glu159 enclose the S4 RNA-binding domain.

Belongs to the universal ribosomal protein uS4 family. As to quaternary structure, part of the 30S ribosomal subunit. Contacts protein S5. The interaction surface between S4 and S5 is involved in control of translational fidelity.

In terms of biological role, one of the primary rRNA binding proteins, it binds directly to 16S rRNA where it nucleates assembly of the body of the 30S subunit. Its function is as follows. With S5 and S12 plays an important role in translational accuracy. The sequence is that of Small ribosomal subunit protein uS4 from Geobacter sp. (strain M21).